The primary structure comprises 203 residues: Large ribosomal subunit protein bL25 (203 aa).

The protein belongs to the bacterial ribosomal protein bL25 family. CTC subfamily. As to quaternary structure, part of the 50S ribosomal subunit; part of the 5S rRNA/L5/L18/L25 subcomplex. Contacts the 5S rRNA. Binds to the 5S rRNA independently of L5 and L18.

Its function is as follows. This is one of the proteins that binds to the 5S RNA in the ribosome where it forms part of the central protuberance. The polypeptide is Large ribosomal subunit protein bL25 (Xanthobacter autotrophicus (strain ATCC BAA-1158 / Py2)).